We begin with the raw amino-acid sequence, 84 residues long: Protein Tlp homolog (84 aa).

The segment at 1–20 is disordered; the sequence is MGKEERYTKKPKPDDRSDNV.

Belongs to the Tlp family.

The polypeptide is Protein Tlp homolog (Caldanaerobacter subterraneus subsp. tengcongensis (strain DSM 15242 / JCM 11007 / NBRC 100824 / MB4) (Thermoanaerobacter tengcongensis)).